Here is a 99-residue protein sequence, read N- to C-terminus: MRAPEEVIIRPIITEKTNRLMEDLNKYVFEVHKDANKHEIKHAVEKLFGVKVKAVNTLYARPRVKRTITRRGRVYGATRGYKKAIITLDKNSKIDFMSL.

This sequence belongs to the universal ribosomal protein uL23 family. As to quaternary structure, part of the 50S ribosomal subunit. Contacts protein L29, and trigger factor when it is bound to the ribosome.

Its function is as follows. One of the early assembly proteins it binds 23S rRNA. One of the proteins that surrounds the polypeptide exit tunnel on the outside of the ribosome. Forms the main docking site for trigger factor binding to the ribosome. This chain is Large ribosomal subunit protein uL23, found in Hydrogenobaculum sp. (strain Y04AAS1).